The primary structure comprises 245 residues: MRLSYFHSPDRVPAEGMADAAVAIDVLRATTTMAWALHNGAEAIQAFADLAQLDAAASAWPDDQSLRAGERGGQKLEGFDLGNSPLAVTPERIGGRRIFMSTTNGTRALDRVRSAPMLLTAALVNRSAVAQRLLQHRPEQIWMVGSGWEGAYSLEDSLAAGALADALLEGSGASLLDLAGNDETCAAHALWQQWKDQPEALLRLASHGQRLQRLGDHDADLACCATVDSLTVVPSQDEPGVLRLS.

The protein belongs to the ComB family. The cofactor is Mg(2+).

It carries out the reaction (2R)-O-phospho-3-sulfolactate + H2O = (2R)-3-sulfolactate + phosphate. This is Probable 2-phosphosulfolactate phosphatase from Synechococcus sp. (strain RCC307).